The primary structure comprises 246 residues: Orotidine 5'-phosphate decarboxylase (246 aa).

Residues Asp22, Lys44, 71–80 (DLKFHDIPNT), Thr131, Arg192, Gln201, Gly221, and Arg222 each bind substrate. Lys73 functions as the Proton donor in the catalytic mechanism.

It belongs to the OMP decarboxylase family. Type 1 subfamily. In terms of assembly, homodimer.

It catalyses the reaction orotidine 5'-phosphate + H(+) = UMP + CO2. It participates in pyrimidine metabolism; UMP biosynthesis via de novo pathway; UMP from orotate: step 2/2. Catalyzes the decarboxylation of orotidine 5'-monophosphate (OMP) to uridine 5'-monophosphate (UMP). The protein is Orotidine 5'-phosphate decarboxylase of Yersinia enterocolitica serotype O:8 / biotype 1B (strain NCTC 13174 / 8081).